Here is a 734-residue protein sequence, read N- to C-terminus: Ribosomal RNA large subunit methyltransferase K/L (734 aa).

The THUMP domain maps to 49 to 167 (HAYRICMWSR…KTEHTYCLDL (119 aa)).

This sequence belongs to the methyltransferase superfamily. RlmKL family.

Its subcellular location is the cytoplasm. It catalyses the reaction guanosine(2445) in 23S rRNA + S-adenosyl-L-methionine = N(2)-methylguanosine(2445) in 23S rRNA + S-adenosyl-L-homocysteine + H(+). It carries out the reaction guanosine(2069) in 23S rRNA + S-adenosyl-L-methionine = N(2)-methylguanosine(2069) in 23S rRNA + S-adenosyl-L-homocysteine + H(+). Specifically methylates the guanine in position 2445 (m2G2445) and the guanine in position 2069 (m7G2069) of 23S rRNA. This is Ribosomal RNA large subunit methyltransferase K/L from Acinetobacter baumannii (strain AYE).